Reading from the N-terminus, the 328-residue chain is UPF0285 protein Mevan_1551 (328 aa).

Belongs to the UPF0285 family.

The polypeptide is UPF0285 protein Mevan_1551 (Methanococcus vannielii (strain ATCC 35089 / DSM 1224 / JCM 13029 / OCM 148 / SB)).